A 174-amino-acid chain; its full sequence is MLDREGYRPNVGIILTNNRDEVFWGKRVREHSWQFPQGGIKPGESPETAMYRELYEEVGLLSQHVKIVGRTRDWLRYDVPNNWVRREWRGSYRGQKQIWYLLRLTGRDCDVNLRATRHPEFDGWRWHQYWAPVDEVIDFKRDVYLGALKELSSRFLRGMESYEDFAARQLSGNR.

Residues Gly6–Lys149 enclose the Nudix hydrolase domain. The short motif at Gly38–Gly59 is the Nudix box element.

Belongs to the Nudix hydrolase family. RppH subfamily. A divalent metal cation serves as cofactor.

In terms of biological role, accelerates the degradation of transcripts by removing pyrophosphate from the 5'-end of triphosphorylated RNA, leading to a more labile monophosphorylated state that can stimulate subsequent ribonuclease cleavage. The chain is RNA pyrophosphohydrolase from Neisseria meningitidis serogroup C / serotype 2a (strain ATCC 700532 / DSM 15464 / FAM18).